Reading from the N-terminus, the 420-residue chain is Phosphoglycerate kinase, cytosolic (420 aa).

(2R)-3-phosphoglycerate-binding residues include valine 23, aspartate 24, phenylalanine 25, asparagine 26, arginine 39, serine 61, histidine 62, glycine 64, arginine 65, arginine 135, histidine 171, and arginine 172. Position 217 (glycine 217) interacts with ADP. Glycine 217 serves as a coordination point for CDP. Lysine 219 contacts (2R)-3-phosphoglycerate. Lysine 219 lines the AMP pocket. Aspartate 222 lines the CDP pocket. Position 222 (aspartate 222) interacts with Mg(2+). ADP contacts are provided by lysine 223 and glycine 241. Lysine 223 contributes to the AMP binding site. Residue lysine 223 participates in ATP binding. Glycine 241 serves as a coordination point for CDP. Alanine 242 and alanine 314 together coordinate AMP. Alanine 242 and alanine 314 together coordinate ATP. ADP contacts are provided by alanine 314 and asparagine 338. The CDP site is built by glycine 339 and phenylalanine 344. Phenylalanine 344, glutamate 345, aspartate 377, and serine 378 together coordinate ADP. Glutamate 345 is an AMP binding site. Residues glutamate 345, aspartate 377, and serine 378 each contribute to the ATP site. Residue aspartate 377 coordinates Mg(2+).

It belongs to the phosphoglycerate kinase family. As to quaternary structure, monomer. The cofactor is Mg(2+).

The protein resides in the cytoplasm. The enzyme catalyses (2R)-3-phosphoglycerate + ATP = (2R)-3-phospho-glyceroyl phosphate + ADP. The protein operates within carbohydrate degradation; glycolysis; pyruvate from D-glyceraldehyde 3-phosphate: step 2/5. This chain is Phosphoglycerate kinase, cytosolic (C1PGK), found in Trypanosoma congolense.